Consider the following 509-residue polypeptide: MSKKPVVLMILDGFGLTNKVDGNAVSAANKPNLDNILKKYPHTQLGASGMDVGLPEGQMGNSEVGHLNIGAGRIVYQALTKITKSISDGDFFENVALNKAIENVKKNNSTLHLLGLLSPGGVHSHIDHLKGLIKLAKEKDIKKVYIHAFLDGRDVAPSSAKEYIEDIENYMNEIGVGEIATISGRYYAMDRDKRWERVQLCYNAIVLGKGEEANSAVEGLEKSYRDNKTDEFVLPSVVLKEGKPKAKIENKDSVVFFNFRPDRARELTRAINDKVFDGFERETLDLTYVTVTEYDSTLENVEVAFPPEHLNNTLGEYVSKNGKKQLRIAETEKYAHVTFFFNGGVEEPNEGEDRVLIPSPKVATYDMQPEMNAYEVTDKLLERLDEDKYDMVILNFANPDMVGHTGVFEAAKKAIETVDECVGKIVNKVLEKDGTAFITADHGNSEEMIDYSTGKPMTAHTTNPVPFMYVSKNSKELREGGKLADIAPTMLQLMNLPKPSEMTGNSLIK.

2 residues coordinate Mn(2+): D12 and S62. Residue S62 is the Phosphoserine intermediate of the active site. Substrate-binding positions include H123, 153 to 154 (RD), R185, R191, 260 to 263 (RPDR), and K333. Residues D400, H404, D441, H442, and H460 each coordinate Mn(2+).

This sequence belongs to the BPG-independent phosphoglycerate mutase family. In terms of assembly, monomer. Mn(2+) is required as a cofactor.

The catalysed reaction is (2R)-2-phosphoglycerate = (2R)-3-phosphoglycerate. It functions in the pathway carbohydrate degradation; glycolysis; pyruvate from D-glyceraldehyde 3-phosphate: step 3/5. In terms of biological role, catalyzes the interconversion of 2-phosphoglycerate and 3-phosphoglycerate. The chain is 2,3-bisphosphoglycerate-independent phosphoglycerate mutase from Clostridium botulinum (strain ATCC 19397 / Type A).